The following is a 443-amino-acid chain: Chromosome partition protein MukF (443 aa).

The interval 209–237 (LDETSGNLRELQDTLNAAGDKLQAQLLRI) is leucine-zipper.

This sequence belongs to the MukF family. As to quaternary structure, interacts, and probably forms a ternary complex, with MukE and MukB via its C-terminal region. The complex formation is stimulated by calcium or magnesium. It is required for an interaction between MukE and MukB.

The protein resides in the cytoplasm. Its subcellular location is the nucleoid. Involved in chromosome condensation, segregation and cell cycle progression. May participate in facilitating chromosome segregation by condensation DNA from both sides of a centrally located replisome during cell division. Not required for mini-F plasmid partitioning. Probably acts via its interaction with MukB and MukE. Overexpression results in anucleate cells. It has a calcium binding activity. This chain is Chromosome partition protein MukF, found in Actinobacillus pleuropneumoniae serotype 3 (strain JL03).